The chain runs to 484 residues: Serine protease HTR4 (484 aa).

The first 28 residues, 1-28 (MARPLQRPAGLGPFVLLWLLLPAPSGRG), serve as a signal peptide directing secretion. One can recognise an IGFBP N-terminal domain in the interval 36–114 (PVPRCPAACE…GRPLGTCGCP (79 aa)). 8 cysteine pairs are disulfide-bonded: C40–C66, C44–C68, C49–C69, C55–C72, C80–C94, C88–C111, C113–C132, and C121–C157. The region spanning 105-159 (GRPLGTCGCPAAGATVCGSDGRTYRSLCALRAENRAARLRGALPAVPVQKGDCGD) is the Kazal-like domain. The serine protease stretch occupies residues 209-369 (ASGFIVSEDG…IPSDRIRQFL (161 aa)). Residues H225, D255, and S333 each act as charge relay system in the active site. The 83-residue stretch at 390-472 (LRMLPLTMNL…LSLLVRRKSQ (83 aa)) folds into the PDZ domain.

This sequence belongs to the peptidase S1C family.

It localises to the secreted. Serine protease. The chain is Serine protease HTR4 (HTRA4) from Bos taurus (Bovine).